The primary structure comprises 261 residues: tRNA pseudouridine synthase A (261 aa).

Catalysis depends on Asp51, which acts as the Nucleophile. Tyr109 is a binding site for substrate.

Belongs to the tRNA pseudouridine synthase TruA family. As to quaternary structure, homodimer.

The enzyme catalyses uridine(38/39/40) in tRNA = pseudouridine(38/39/40) in tRNA. Its function is as follows. Formation of pseudouridine at positions 38, 39 and 40 in the anticodon stem and loop of transfer RNAs. This chain is tRNA pseudouridine synthase A, found in Shewanella loihica (strain ATCC BAA-1088 / PV-4).